A 365-amino-acid polypeptide reads, in one-letter code: Phosphoserine aminotransferase (365 aa).

L-glutamate is bound at residue Arg40. Residues 74 to 75, Phe99, Thr155, Asp177, and Gln200 contribute to the pyridoxal 5'-phosphate site; that span reads AS. At Lys201 the chain carries N6-(pyridoxal phosphate)lysine. Pyridoxal 5'-phosphate is bound at residue 241–242; it reads NT.

It belongs to the class-V pyridoxal-phosphate-dependent aminotransferase family. SerC subfamily. As to quaternary structure, homodimer. Pyridoxal 5'-phosphate serves as cofactor.

It is found in the cytoplasm. The catalysed reaction is O-phospho-L-serine + 2-oxoglutarate = 3-phosphooxypyruvate + L-glutamate. It catalyses the reaction 4-(phosphooxy)-L-threonine + 2-oxoglutarate = (R)-3-hydroxy-2-oxo-4-phosphooxybutanoate + L-glutamate. It participates in amino-acid biosynthesis; L-serine biosynthesis; L-serine from 3-phospho-D-glycerate: step 2/3. Catalyzes the reversible conversion of 3-phosphohydroxypyruvate to phosphoserine and of 3-hydroxy-2-oxo-4-phosphonooxybutanoate to phosphohydroxythreonine. The protein is Phosphoserine aminotransferase of Lactococcus lactis subsp. cremoris (strain MG1363).